A 155-amino-acid polypeptide reads, in one-letter code: Small ribosomal subunit protein uS7cz/uS7cy (155 aa).

It belongs to the universal ribosomal protein uS7 family. As to quaternary structure, part of the 30S ribosomal subunit.

The protein localises to the plastid. Its subcellular location is the chloroplast. Functionally, one of the primary rRNA binding proteins, it binds directly to 16S rRNA where it nucleates assembly of the head domain of the 30S subunit. The sequence is that of Small ribosomal subunit protein uS7cz/uS7cy (rps7-A) from Chloranthus spicatus (Chulantree).